The following is a 255-amino-acid chain: TIR domain-containing protein (255 aa).

One can recognise a TIR domain in the interval Leu-9–Leu-185. Residue Glu-83 is part of the active site. The next 2 helical transmembrane spans lie at Ala-195–Pro-215 and Phe-223–Trp-243. One can recognise a KASH domain in the interval Leu-201 to Ser-255.

As to quaternary structure, forms homomers. Interacts with SUN1, SUN2, SUN3, SUN4 and SUN5.

The protein localises to the nucleus membrane. The catalysed reaction is NAD(+) + H2O = ADP-D-ribose + nicotinamide + H(+). Its function is as follows. Could play a role in nuclear morphology, specifically nuclear size. This Arabidopsis thaliana (Mouse-ear cress) protein is TIR domain-containing protein.